We begin with the raw amino-acid sequence, 358 residues long: 3-isopropylmalate dehydrogenase (358 aa).

Position 79–92 (glycine 79–glutamate 92) interacts with NAD(+). Positions 100, 110, 139, and 227 each coordinate substrate. Mg(2+) is bound by residues aspartate 227, aspartate 251, and aspartate 255. Glycine 285–asparagine 297 serves as a coordination point for NAD(+).

This sequence belongs to the isocitrate and isopropylmalate dehydrogenases family. LeuB type 1 subfamily. Homodimer. Mg(2+) is required as a cofactor. The cofactor is Mn(2+).

The protein resides in the cytoplasm. The catalysed reaction is (2R,3S)-3-isopropylmalate + NAD(+) = 4-methyl-2-oxopentanoate + CO2 + NADH. Its pathway is amino-acid biosynthesis; L-leucine biosynthesis; L-leucine from 3-methyl-2-oxobutanoate: step 3/4. Its function is as follows. Catalyzes the oxidation of 3-carboxy-2-hydroxy-4-methylpentanoate (3-isopropylmalate) to 3-carboxy-4-methyl-2-oxopentanoate. The product decarboxylates to 4-methyl-2 oxopentanoate. This is 3-isopropylmalate dehydrogenase from Pseudoalteromonas translucida (strain TAC 125).